The chain runs to 361 residues: Homocitrate synthase (361 aa).

In terms of domain architecture, Pyruvate carboxyltransferase spans 1–251; sequence MVLDSTLREG…KYRLDLLYRV (251 aa). Arginine 8 lines the 2-oxoglutarate pocket. Residue glutamate 9 coordinates Mg(2+). Residues histidine 68, arginine 128, and threonine 162 each coordinate 2-oxoglutarate. 2 residues coordinate Mg(2+): histidine 188 and histidine 190. The Proton acceptor role is filled by histidine 282.

Belongs to the alpha-IPM synthase/homocitrate synthase family. Homocitrate synthase LYS20/LYS21 subfamily. Mg(2+) serves as cofactor. Requires Mn(2+) as cofactor.

It carries out the reaction acetyl-CoA + 2-oxoglutarate + H2O = (2R)-homocitrate + CoA + H(+). Its pathway is amino-acid biosynthesis; L-lysine biosynthesis via AAA pathway; L-alpha-aminoadipate from 2-oxoglutarate: step 1/5. In terms of biological role, catalyzes the aldol-type condensation of 2-oxoglutarate with acetyl-CoA to yield homocitrate. Carries out the first step of the alpha-aminoadipate (AAA) lysine biosynthesis pathway. The protein is Homocitrate synthase of Pyrococcus abyssi (strain GE5 / Orsay).